The primary structure comprises 274 residues: Thiazole synthase (274 aa).

Lys-111 serves as the catalytic Schiff-base intermediate with DXP. Residues Gly-172, 198 to 199 (AG), and 220 to 221 (NT) each bind 1-deoxy-D-xylulose 5-phosphate.

This sequence belongs to the ThiG family. In terms of assembly, homotetramer. Forms heterodimers with either ThiH or ThiS.

Its subcellular location is the cytoplasm. The catalysed reaction is [ThiS sulfur-carrier protein]-C-terminal-Gly-aminoethanethioate + 2-iminoacetate + 1-deoxy-D-xylulose 5-phosphate = [ThiS sulfur-carrier protein]-C-terminal Gly-Gly + 2-[(2R,5Z)-2-carboxy-4-methylthiazol-5(2H)-ylidene]ethyl phosphate + 2 H2O + H(+). It functions in the pathway cofactor biosynthesis; thiamine diphosphate biosynthesis. Its function is as follows. Catalyzes the rearrangement of 1-deoxy-D-xylulose 5-phosphate (DXP) to produce the thiazole phosphate moiety of thiamine. Sulfur is provided by the thiocarboxylate moiety of the carrier protein ThiS. In vitro, sulfur can be provided by H(2)S. The polypeptide is Thiazole synthase (Gloeobacter violaceus (strain ATCC 29082 / PCC 7421)).